A 387-amino-acid polypeptide reads, in one-letter code: DNA primase small subunit PriS (387 aa).

Catalysis depends on residues aspartate 98, aspartate 100, and aspartate 289.

It belongs to the eukaryotic-type primase small subunit family. In terms of assembly, heterodimer of a small subunit (PriS) and a large subunit (PriL). The cofactor is Mg(2+). Mn(2+) serves as cofactor.

Catalytic subunit of DNA primase, an RNA polymerase that catalyzes the synthesis of short RNA molecules used as primers for DNA polymerase during DNA replication. The small subunit contains the primase catalytic core and has DNA synthesis activity on its own. Binding to the large subunit stabilizes and modulates the activity, increasing the rate of DNA synthesis while decreasing the length of the DNA fragments, and conferring RNA synthesis capability. The DNA polymerase activity may enable DNA primase to also catalyze primer extension after primer synthesis. May also play a role in DNA repair. In Halorubrum lacusprofundi (strain ATCC 49239 / DSM 5036 / JCM 8891 / ACAM 34), this protein is DNA primase small subunit PriS.